Here is a 265-residue protein sequence, read N- to C-terminus: Flap endonuclease Xni (265 aa).

Asp111 contacts Mg(2+). The 94-residue stretch at 167 to 260 (VVPAQLVDFW…NLREIRYPPA (94 aa)) folds into the 5'-3' exonuclease domain. The K(+) site is built by Leu178, Val189, and Ile192. Positions 191–196 (GIGPKT) are interaction with DNA.

The protein belongs to the Xni family. Mg(2+) serves as cofactor. It depends on K(+) as a cofactor.

Its function is as follows. Has flap endonuclease activity. During DNA replication, flap endonucleases cleave the 5'-overhanging flap structure that is generated by displacement synthesis when DNA polymerase encounters the 5'-end of a downstream Okazaki fragment. The polypeptide is Flap endonuclease Xni (Aeromonas salmonicida (strain A449)).